The following is a 223-amino-acid chain: Putative 3-methyladenine DNA glycosylase (223 aa).

Belongs to the DNA glycosylase MPG family.

The chain is Putative 3-methyladenine DNA glycosylase from Pseudomonas syringae pv. syringae (strain B728a).